The following is a 566-amino-acid chain: 2-isopropylmalate synthase (566 aa).

One can recognise a Pyruvate carboxyltransferase domain in the interval 32–306; sequence PLWCAVDLRD…DPQIDFSNID (275 aa). Positions 41, 245, 247, and 281 each coordinate Mg(2+). The regulatory domain stretch occupies residues 451–566; the sequence is PVRPLERIKQ…VVSAINRASR (116 aa).

Belongs to the alpha-IPM synthase/homocitrate synthase family. LeuA type 2 subfamily. As to quaternary structure, homodimer. Mg(2+) serves as cofactor.

Its subcellular location is the cytoplasm. The catalysed reaction is 3-methyl-2-oxobutanoate + acetyl-CoA + H2O = (2S)-2-isopropylmalate + CoA + H(+). It functions in the pathway amino-acid biosynthesis; L-leucine biosynthesis; L-leucine from 3-methyl-2-oxobutanoate: step 1/4. Its function is as follows. Catalyzes the condensation of the acetyl group of acetyl-CoA with 3-methyl-2-oxobutanoate (2-ketoisovalerate) to form 3-carboxy-3-hydroxy-4-methylpentanoate (2-isopropylmalate). The chain is 2-isopropylmalate synthase from Mycobacterium ulcerans (strain Agy99).